The following is a 275-amino-acid chain: Gamma carbonic anhydrase 1, mitochondrial (275 aa).

The N-terminal 43 residues, 1-43 (MGTLGRAFYSVGFWIRETGQALDRLGCRLQGKNYFREQLSRHR), are a transit peptide targeting the mitochondrion. Substrate is bound by residues 86–88 (RGD) and 101–102 (QD). Positions 107, 130, and 135 each coordinate Zn(2+). Residue N209 participates in substrate binding. Positions 256-275 (LNLPNNILPDKETKRPSNVN) are disordered. Residues 264–275 (PDKETKRPSNVN) show a composition bias toward basic and acidic residues.

This sequence belongs to the gamma-class carbonic anhydrase family. As to quaternary structure, homotrimer. Component of the mitochondrial oxidoreductase respiratory chain complex I; element of the extra matrix-exposed domain, which is attached to the membrane arm of this complex. Requires Zn(2+) as cofactor.

The protein resides in the mitochondrion membrane. Its function is as follows. Enzyme involved in the catabolism of H(2)CO(3) but that does not mediates the reversible hydration of carbon dioxide. Mediates complex I assembly in mitochondria and respiration. In Arabidopsis thaliana (Mouse-ear cress), this protein is Gamma carbonic anhydrase 1, mitochondrial (GAMMACA1).